Consider the following 253-residue polypeptide: Purine nucleoside phosphorylase DR_1966 (253 aa).

Residues H72, C106, and H123 each coordinate Zn(2+).

The protein belongs to the purine nucleoside phosphorylase YfiH/LACC1 family. As to quaternary structure, homodimer. The cofactor is Cu(2+). Requires Zn(2+) as cofactor.

The enzyme catalyses adenosine + phosphate = alpha-D-ribose 1-phosphate + adenine. The catalysed reaction is S-methyl-5'-thioadenosine + phosphate = 5-(methylsulfanyl)-alpha-D-ribose 1-phosphate + adenine. It carries out the reaction inosine + phosphate = alpha-D-ribose 1-phosphate + hypoxanthine. It catalyses the reaction adenosine + H2O + H(+) = inosine + NH4(+). Functionally, purine nucleoside enzyme that catalyzes the phosphorolysis of adenosine and inosine nucleosides, yielding D-ribose 1-phosphate and the respective free bases, adenine and hypoxanthine. Also catalyzes the phosphorolysis of S-methyl-5'-thioadenosine into adenine and S-methyl-5-thio-alpha-D-ribose 1-phosphate. Also has adenosine deaminase activity. The polypeptide is Purine nucleoside phosphorylase DR_1966 (Deinococcus radiodurans (strain ATCC 13939 / DSM 20539 / JCM 16871 / CCUG 27074 / LMG 4051 / NBRC 15346 / NCIMB 9279 / VKM B-1422 / R1)).